A 562-amino-acid polypeptide reads, in one-letter code: Tetratricopeptide repeat protein 34 (562 aa).

A disordered region spans residues 1-30 (MLHKKPQRANENGISQRKKPSDQDNSSVKE). A compositionally biased stretch (basic and acidic residues) spans 19 to 30 (KPSDQDNSSVKE). TPR repeat units lie at residues 51–84 (DVSR…SSQR), 175–208 (KDSL…EPYN), 210–242 (EALS…DASY), 304–337 (AHFH…NAID), 388–421 (FQAA…SNNN), 423–455 (KYLR…HSSH), 461–494 (AEDY…EHAS), and 509–542 (AGIF…DENN).

This chain is Tetratricopeptide repeat protein 34 (ttc34), found in Xenopus laevis (African clawed frog).